Consider the following 436-residue polypeptide: MASWIFKLLLLLQCVLVLIQHADSSSIIRYLPGFEGPLPFELETGYIGVGQKEEDQLFYYFIKSENNPEEDPLLVWLTGGPGCSSFSGLVYENGPLAFKVETYNGSVPTLVSTTYSWTKVANIIYLDQPVGTGFSYSRNPFADIPSDTGSVKRVNEFVRKWLAKHPEYFSNPFYVTGNSYSGKVIPAIVQEISNGNYICCKPQINLQGYVIGNPVAYYDHDKDFRIPFAHGVALISDELFESLKASCGGSYSVVDPLNTECLKLIEDYDKCVSGIYEELILKSKCEHTSPDCYTYRYLLSEYWADNETVRRALKVVKGSKGTWERCDYRVLSNQDIKSSIPFHINNSIRGYRSLVISGDHDMTIPFLGTQAWIRSLNYSITEKWRPWMILDQVAGYTKTYANKMTLATVKGGGHTLEYKPEENSVLFKRWISGQPL.

The first 24 residues, 1-24, serve as a signal peptide directing secretion; sequence MASWIFKLLLLLQCVLVLIQHADS. Disulfide bonds link cysteine 83/cysteine 326, cysteine 247/cysteine 261, and cysteine 285/cysteine 292. A glycan (N-linked (GlcNAc...) asparagine) is linked at asparagine 104. The active site involves serine 179. N-linked (GlcNAc...) asparagine glycosylation is found at asparagine 306 and asparagine 345. The active site involves aspartate 361. The N-linked (GlcNAc...) asparagine glycan is linked to asparagine 377. Histidine 414 is an active-site residue.

Belongs to the peptidase S10 family. Expressed in seedlings and roots.

The protein resides in the secreted. Functionally, probable carboxypeptidase. In Arabidopsis thaliana (Mouse-ear cress), this protein is Serine carboxypeptidase-like 15 (SCPL15).